We begin with the raw amino-acid sequence, 113 residues long: UPF0342 protein spyM18_0873 (113 aa).

The protein belongs to the UPF0342 family.

The chain is UPF0342 protein spyM18_0873 from Streptococcus pyogenes serotype M18 (strain MGAS8232).